Consider the following 496-residue polypeptide: L-arabinose isomerase (496 aa).

Mn(2+) is bound by residues Glu302, Glu329, His346, and His445.

Belongs to the arabinose isomerase family. Mn(2+) is required as a cofactor.

The catalysed reaction is beta-L-arabinopyranose = L-ribulose. Its pathway is carbohydrate degradation; L-arabinose degradation via L-ribulose; D-xylulose 5-phosphate from L-arabinose (bacterial route): step 1/3. Catalyzes the conversion of L-arabinose to L-ribulose. The protein is L-arabinose isomerase of Thermotoga maritima (strain ATCC 43589 / DSM 3109 / JCM 10099 / NBRC 100826 / MSB8).